A 600-amino-acid polypeptide reads, in one-letter code: Chaperonin 60 subunit beta 1, chloroplastic (600 aa).

Over residues 1–12 (MASTFTATSSIG) the composition is skewed to polar residues. The tract at residues 1-23 (MASTFTATSSIGSMVAPNGHKSD) is disordered. A chloroplast-targeting transit peptide spans 1-54 (MASTFTATSSIGSMVAPNGHKSDKKLISKLSSSSFGRRQSVCPRPRRSSSAIVC). A phosphoserine mark is found at Ser-101 and Ser-478.

The protein belongs to the chaperonin (HSP60) family. Part of the Cpn60 complex composed of 7 alpha and 7 beta subunits. Can also form a complex composed of 14 beta subunits only. Both complexes show ATPase activity. The Cpn60 complex interacts with the Cpn10 complex. Interacts with RAB during heat stress. As to expression, expressed in leaves, stems, petioles and flowers.

Its subcellular location is the plastid. The protein resides in the chloroplast stroma. Its function is as follows. Binds RuBisCO small and large subunits and is implicated in the assembly of the enzyme oligomer. Involved in protein assisted folding. Required for proper plastid division. This chain is Chaperonin 60 subunit beta 1, chloroplastic (CPN60B1), found in Arabidopsis thaliana (Mouse-ear cress).